The following is a 672-amino-acid chain: Synaptotagmin-like protein 4 (672 aa).

The RabBD domain maps to 4-122 (ILDLSFLSEM…KATGDWFYDQ (119 aa)). The FYVE-type zinc finger occupies 63–105 (CARCQEGLGRLISKSNTCVGCNHLVCRECRVLESNGSWRCKVC). Positions 199–222 (SESLDSYTADSDSTSRRDSLDKSG) are disordered. A phosphoserine mark is found at serine 201, serine 204, serine 217, serine 221, and serine 274. One can recognise a C2 1 domain in the interval 357 to 479 (VTGKIAFSLK…KLDKKLDHCL (123 aa)). Position 489 is a phosphoserine (serine 489). Residues 508–634 (PASKLPVGGD…ISSGEVVDWM (127 aa)) enclose the C2 2 domain.

As to quaternary structure, part of a ternary complex containing STX1A and RAB27A. Can bind both dominant negative and dominant active mutants of RAB27A. Binds STXBP1, RAB3A, RAB8A and RAB27B. Interacts with MYO5A. In terms of tissue distribution, detected in insulin-secreting cell lines.

It localises to the membrane. Its subcellular location is the cytoplasmic vesicle. The protein resides in the secretory vesicle membrane. Modulates exocytosis of dense-core granules and secretion of hormones in the pancreas and the pituitary. Interacts with vesicles containing negatively charged phospholipids in a Ca(2+)-independent manner. This is Synaptotagmin-like protein 4 (Sytl4) from Rattus norvegicus (Rat).